Reading from the N-terminus, the 572-residue chain is 2-succinyl-5-enolpyruvyl-6-hydroxy-3-cyclohexene-1-carboxylate synthase (572 aa).

This sequence belongs to the TPP enzyme family. MenD subfamily. As to quaternary structure, homodimer. Mg(2+) serves as cofactor. Requires Mn(2+) as cofactor. It depends on thiamine diphosphate as a cofactor.

The catalysed reaction is isochorismate + 2-oxoglutarate + H(+) = 5-enolpyruvoyl-6-hydroxy-2-succinyl-cyclohex-3-ene-1-carboxylate + CO2. It functions in the pathway quinol/quinone metabolism; 1,4-dihydroxy-2-naphthoate biosynthesis; 1,4-dihydroxy-2-naphthoate from chorismate: step 2/7. Its pathway is quinol/quinone metabolism; menaquinone biosynthesis. Catalyzes the thiamine diphosphate-dependent decarboxylation of 2-oxoglutarate and the subsequent addition of the resulting succinic semialdehyde-thiamine pyrophosphate anion to isochorismate to yield 2-succinyl-5-enolpyruvyl-6-hydroxy-3-cyclohexene-1-carboxylate (SEPHCHC). The protein is 2-succinyl-5-enolpyruvyl-6-hydroxy-3-cyclohexene-1-carboxylate synthase of Aeromonas salmonicida (strain A449).